Consider the following 529-residue polypeptide: Bifunctional purine biosynthesis protein PurH (529 aa).

One can recognise an MGS-like domain in the interval 1–148 (MNNVRPIRRA…KNHKDTTIVV (148 aa)).

This sequence belongs to the PurH family.

It carries out the reaction (6R)-10-formyltetrahydrofolate + 5-amino-1-(5-phospho-beta-D-ribosyl)imidazole-4-carboxamide = 5-formamido-1-(5-phospho-D-ribosyl)imidazole-4-carboxamide + (6S)-5,6,7,8-tetrahydrofolate. The enzyme catalyses IMP + H2O = 5-formamido-1-(5-phospho-D-ribosyl)imidazole-4-carboxamide. Its pathway is purine metabolism; IMP biosynthesis via de novo pathway; 5-formamido-1-(5-phospho-D-ribosyl)imidazole-4-carboxamide from 5-amino-1-(5-phospho-D-ribosyl)imidazole-4-carboxamide (10-formyl THF route): step 1/1. It functions in the pathway purine metabolism; IMP biosynthesis via de novo pathway; IMP from 5-formamido-1-(5-phospho-D-ribosyl)imidazole-4-carboxamide: step 1/1. This chain is Bifunctional purine biosynthesis protein PurH, found in Shewanella frigidimarina (strain NCIMB 400).